The sequence spans 444 residues: Light-independent protochlorophyllide reductase subunit N (444 aa).

Cys36, Cys61, and Cys118 together coordinate [4Fe-4S] cluster.

This sequence belongs to the BchN/ChlN family. Protochlorophyllide reductase is composed of three subunits; BchL, BchN and BchB. Forms a heterotetramer of two BchB and two BchN subunits. [4Fe-4S] cluster serves as cofactor.

It catalyses the reaction chlorophyllide a + oxidized 2[4Fe-4S]-[ferredoxin] + 2 ADP + 2 phosphate = protochlorophyllide a + reduced 2[4Fe-4S]-[ferredoxin] + 2 ATP + 2 H2O. Its pathway is porphyrin-containing compound metabolism; bacteriochlorophyll biosynthesis (light-independent). Its function is as follows. Component of the dark-operative protochlorophyllide reductase (DPOR) that uses Mg-ATP and reduced ferredoxin to reduce ring D of protochlorophyllide (Pchlide) to form chlorophyllide a (Chlide). This reaction is light-independent. The NB-protein (BchN-BchB) is the catalytic component of the complex. This is Light-independent protochlorophyllide reductase subunit N from Chloroflexus aurantiacus (strain ATCC 29366 / DSM 635 / J-10-fl).